Here is an 826-residue protein sequence, read N- to C-terminus: Ubiquitin carboxyl-terminal hydrolase 16 (826 aa).

The segment at 22 to 142 (PMCRHIRKGL…QVVDYVRKQA (121 aa)) adopts a UBP-type zinc-finger fold. Cys-24, His-26, Cys-48, Cys-51, Cys-74, Cys-77, Cys-82, His-90, His-94, His-103, Cys-116, and Cys-119 together coordinate Zn(2+). A Glycyl lysine isopeptide (Lys-Gly) (interchain with G-Cter in SUMO2) cross-link involves residue Lys-140. Residues 146-190 (TPKPAEKDNGNIELENKKLEKESKNEQEREKKENMAKENPPMNSP) form a disordered region. A compositionally biased stretch (basic and acidic residues) spans 149 to 181 (PAEKDNGNIELENKKLEKESKNEQEREKKENMA). The residue at position 189 (Ser-189) is a Phosphoserine. The 630-residue stretch at 196 to 825 (KGLSNLGNTC…QAYLLFYERI (630 aa)) folds into the USP domain. Residue Cys-205 is the Nucleophile of the active site. The segment covering 394–408 (SGKKSVNDKNLKKTM) has biased composition (basic and acidic residues). Residues 394–460 (SGKKSVNDKN…AKNQRRQQKI (67 aa)) form a disordered region. Acidic residues predominate over residues 409–420 (EDEDQDSEEEKD). Phosphoserine is present on Ser-415. The segment covering 421–430 (NDSYIKERSD) has biased composition (basic and acidic residues). Over residues 438-458 (HLQKKAKKQAKKQAKNQRRQQ) the composition is skewed to basic residues. A Phosphoserine modification is found at Ser-552. A Phosphothreonine modification is found at Thr-557. His-761 (proton acceptor) is an active-site residue.

Belongs to the peptidase C19 family. USP16 subfamily. In terms of assembly, homotetramer. Associates with late pre-40S ribosomes. Interacts with CEP78; promoting deubiquitination of tektins. Phosphorylated at the onset of mitosis and dephosphorylated during the metaphase/anaphase transition. Phosphorylation by AURKB enhances the deubiquitinase activity.

Its subcellular location is the nucleus. It catalyses the reaction Thiol-dependent hydrolysis of ester, thioester, amide, peptide and isopeptide bonds formed by the C-terminal Gly of ubiquitin (a 76-residue protein attached to proteins as an intracellular targeting signal).. Specifically deubiquitinates 'Lys-120' of histone H2A (H2AK119Ub), a specific tag for epigenetic transcriptional repression, thereby acting as a coactivator. Deubiquitination of histone H2A is a prerequisite for subsequent phosphorylation at 'Ser-11' of histone H3 (H3S10ph), and is required for chromosome segregation when cells enter into mitosis. In resting B- and T-lymphocytes, phosphorylation by AURKB leads to enhance its activity, thereby maintaining transcription in resting lymphocytes. Regulates Hox gene expression via histone H2A deubiquitination. Prefers nucleosomal substrates. Does not deubiquitinate histone H2B. Also deubiquitinates non-histone proteins, such as ribosomal protein RPS27A: deubiquitination of monoubiquitinated RPS27A promotes maturation of the 40S ribosomal subunit. Also mediates deubiquitination of tektin proteins (TEKT1, TEKT2, TEK3, TEKT4 and TEKT5), promoting their stability. The polypeptide is Ubiquitin carboxyl-terminal hydrolase 16 (Macaca fascicularis (Crab-eating macaque)).